A 660-amino-acid polypeptide reads, in one-letter code: MEKSKGRKSVSQATVENCMENPGLELMEGGNLEQRYTQEEVTQGHSLEDGLGHSSLWSRRIFQPFTKARSFFERHAGLFRKILLGLLCLAYAAYFLAACILNFQRALALFVITCLVIFILACHFLKKFFPKEQLRCLKPLENTHLNLWAKRVFVGLSVVGLILWLALDTAQRPEQLISFAGICMFILILFACSKHHSAVCWRTVFWGLGLQFIFGILVIRTEPGFNAFQWLGDQIQIFLAYTVEGSSFVFGDTLVQNVFAFQSLPIIIFFGCVMSILYYLGLVQWVIQKVAWFLQITMGTTAAETLAVAGNIFVGMTEAPLLIRPYLADMTISEIHAVMTGGFATIAGTVLGAFISFGIDASSLISASVMAAPCALALSKLVYPEVEESKFKSKEGLKLPRGEERNILEAASNGATDAISLVANVAANLIAFLAVLAFINATLSWLGEMVDIHGLSFQVICSYVLRPMVFMMGVQWADCPLVAEIVGVKFFINEFVAYQQLSQYKNKRLSGVEEWINGEKQWISVKAEIITTFSLCGFANLSSIGITLGGLTSMIPQRKSDLCKIVVRALFTGACVSFISACMAGILYVPRGAETDCVSFLNTNFTNRTYETYVCCRELFQSTSLNGTNMPSFSGPWQDNVSSLRNLASCCDLYTSTVCA.

Ser-46 carries the post-translational modification Phosphoserine. A run of 14 helical transmembrane segments spans residues 82–102 (ILLGLLCLAYAAYFLAACILN), 106–125 (ALALFVITCLVIFILACHFL), 150–168 (KRVFVGLSVVGLILWLALD), 174–194 (EQLISFAGICMFILILFACSK), 202–222 (RTVFWGLGLQFIFGILVIRTE), 235–255 (IQIFLAYTVEGSSFVFGDTLV), 262–282 (QSLPIIIFFGCVMSILYYLGL), 297–316 (TMGTTAAETLAVAGNIFVGM), 338–357 (VMTGGFATIAGTVLGAFISF), 364–383 (LISASVMAAPCALALSKLVY), 425–445 (VAANLIAFLAVLAFINATLSW), 456–476 (SFQVICSYVLRPMVFMMGVQW), 531–551 (TTFSLCGFANLSSIGITLGGL), and 569–589 (ALFTGACVSFISACMAGILYV).

Belongs to the concentrative nucleoside transporter (CNT) (TC 2.A.41) family.

Its subcellular location is the membrane. It is found in the apicolateral cell membrane. It catalyses the reaction adenosine(out) + Na(+)(out) = adenosine(in) + Na(+)(in). The enzyme catalyses inosine(out) + Na(+)(out) = inosine(in) + Na(+)(in). The catalysed reaction is guanosine(out) + Na(+)(out) = guanosine(in) + Na(+)(in). It carries out the reaction uridine(out) + Na(+)(out) = uridine(in) + Na(+)(in). Functionally, sodium-dependent and purine-selective transporter. Exhibits the transport characteristics of the nucleoside transport system cif or N1 subtype (N1/cif) (selective for purine nucleosides and uridine). Plays a critical role in specific uptake and salvage of purine nucleosides in kidney and other tissues. May contribute to regulate the transport of organic compounds in testes across the blood-testis-barrier. In Mus musculus (Mouse), this protein is Sodium/nucleoside cotransporter 2 (Slc28a2).